We begin with the raw amino-acid sequence, 89 residues long: Mitochondrial import inner membrane translocase subunit Tim9 (89 aa).

Ala-2 carries the N-acetylalanine modification. The short motif at 28-52 (CFLDCVKDFTTREVKPEEVTCSEHC) is the Twin CX3C motif element. 2 disulfide bridges follow: Cys-28–Cys-52 and Cys-32–Cys-48.

The protein belongs to the small Tim family. Heterohexamer; composed of 3 copies of TIMM9 and 3 copies of TIMM10/TIM10A, named soluble 70 kDa complex. The complex forms a 6-bladed alpha-propeller structure and associates with the TIMM22 component of the TIM22 complex. Interacts with multi-pass transmembrane proteins in transit. Also forms a complex composed of TIMM9, TIMM10/TIM10A and FXC1/TIM10B.

It is found in the mitochondrion inner membrane. Its function is as follows. Mitochondrial intermembrane chaperone that participates in the import and insertion of multi-pass transmembrane proteins into the mitochondrial inner membrane. May also be required for the transfer of beta-barrel precursors from the TOM complex to the sorting and assembly machinery (SAM complex) of the outer membrane. Acts as a chaperone-like protein that protects the hydrophobic precursors from aggregation and guide them through the mitochondrial intermembrane space. This chain is Mitochondrial import inner membrane translocase subunit Tim9 (Timm9), found in Rattus norvegicus (Rat).